The following is a 126-amino-acid chain: Small ribosomal subunit protein uS8 (126 aa).

Belongs to the universal ribosomal protein uS8 family. Part of the 30S ribosomal subunit. Contacts proteins S5 and S12.

In terms of biological role, one of the primary rRNA binding proteins, it binds directly to 16S rRNA central domain where it helps coordinate assembly of the platform of the 30S subunit. This Lawsonia intracellularis (strain PHE/MN1-00) protein is Small ribosomal subunit protein uS8.